Reading from the N-terminus, the 329-residue chain is Peroxidase 58 (329 aa).

A signal peptide spans M1–A23. Intrachain disulfides connect C34–C116, C67–C72, C122–C325, and C201–C234. N36 carries N-linked (GlcNAc...) asparagine glycosylation. H65 functions as the Proton acceptor in the catalytic mechanism. D66, V69, G71, D73, and S75 together coordinate Ca(2+). Residue P164 coordinates substrate. Residue H194 coordinates heme b. Residue T195 coordinates Ca(2+). A glycan (N-linked (GlcNAc...) asparagine) is linked at N210. The Ca(2+) site is built by D247, S250, and D255.

Belongs to the peroxidase family. Classical plant (class III) peroxidase subfamily. Requires heme b as cofactor. Ca(2+) is required as a cofactor.

The protein resides in the secreted. It catalyses the reaction 2 a phenolic donor + H2O2 = 2 a phenolic radical donor + 2 H2O. Removal of H(2)O(2), oxidation of toxic reductants, biosynthesis and degradation of lignin, suberization, auxin catabolism, response to environmental stresses such as wounding, pathogen attack and oxidative stress. These functions might be dependent on each isozyme/isoform in each plant tissue. The chain is Peroxidase 58 (PER58) from Arabidopsis thaliana (Mouse-ear cress).